Here is a 274-residue protein sequence, read N- to C-terminus: Diaminopimelate epimerase (274 aa).

3 residues coordinate substrate: Asn11, Gln44, and Asn64. Residue Cys73 is the Proton donor of the active site. Substrate is bound by residues 74-75 (GN), Asn157, Asn190, and 208-209 (ER). Residue Cys217 is the Proton acceptor of the active site. 218 to 219 (GS) lines the substrate pocket.

The protein belongs to the diaminopimelate epimerase family. In terms of assembly, homodimer.

Its subcellular location is the cytoplasm. It carries out the reaction (2S,6S)-2,6-diaminopimelate = meso-2,6-diaminopimelate. The protein operates within amino-acid biosynthesis; L-lysine biosynthesis via DAP pathway; DL-2,6-diaminopimelate from LL-2,6-diaminopimelate: step 1/1. Its function is as follows. Catalyzes the stereoinversion of LL-2,6-diaminopimelate (L,L-DAP) to meso-diaminopimelate (meso-DAP), a precursor of L-lysine and an essential component of the bacterial peptidoglycan. This chain is Diaminopimelate epimerase, found in Actinobacillus pleuropneumoniae serotype 7 (strain AP76).